We begin with the raw amino-acid sequence, 110 residues long: MVSGNDQQVIEYTSVLKEFSDGVDLMELKENFLYIRTREKIEAKLIWAGEWEWKPVNETNENNLERGRQYPSANSALMENSPEFAKWFHGQLFNRLCVLGSTSSSRKDML.

This is an uncharacterized protein from Schizosaccharomyces pombe (strain 972 / ATCC 24843) (Fission yeast).